The sequence spans 605 residues: Pescadillo homolog (605 aa).

The sufficient for interaction with ERB1 stretch occupies residues 51–484 (KANKGSTAPT…GEEEESESES (434 aa)). Residue Ser288 is modified to Phosphoserine. Residues 294–342 (LKSALNADEANTDETEKEEEQEKKQEKEQEKEQNEETELDTFEDNNKNK) adopt a coiled-coil conformation. Positions 297–342 (ALNADEANTDETEKEEEQEKKQEKEQEKEQNEETELDTFEDNNKNK) are disordered. Residues 303 to 312 (ANTDETEKEE) are compositionally biased toward acidic residues. Thr308 carries the post-translational modification Phosphothreonine. Residues 313-327 (EQEKKQEKEQEKEQN) are compositionally biased toward basic and acidic residues. The BRCT domain occupies 355-449 (PVASLFSAFV…ELVPANKYLP (95 aa)). Residues 459–605 (PWGDAIGYDP…AKLNKLDSKK (147 aa)) form a disordered region. Acidic residues predominate over residues 473 to 510 (EEGEEEESESESESEDQVEEEDQEVVAGEEDDDDDEEL). Positions 530–605 (EADKDVNKSK…AKLNKLDSKK (76 aa)) form a coiled coil. The span at 562 to 571 (KQKKLYKKMK) shows a compositional bias: basic residues. Residues 575 to 584 (AKKEEQAENL) show a composition bias toward basic and acidic residues. Positions 585-598 (KKKKKQIAKQKAKL) are enriched in basic residues.

Belongs to the pescadillo family. As to quaternary structure, component of the NOP7 complex, composed of ERB1, NOP7 and YTM1. The complex is held together by ERB1, which interacts with NOP7 via its N-terminal domain and with YTM1 via a high-affinity interaction between the seven-bladed beta-propeller domains of the 2 proteins. The NOP7 complex associates with the 66S pre-ribosome.

Its subcellular location is the nucleus. The protein resides in the nucleolus. It localises to the nucleoplasm. Functionally, component of the NOP7 complex, which is required for maturation of the 25S and 5.8S ribosomal RNAs and formation of the 60S ribosome. The sequence is that of Pescadillo homolog from Saccharomyces cerevisiae (strain YJM789) (Baker's yeast).